Reading from the N-terminus, the 524-residue chain is Probable cytosol aminopeptidase (524 aa).

The Mn(2+) site is built by Lys-288 and Asp-293. The active site involves Lys-300. Mn(2+) contacts are provided by Asp-311, Asp-370, and Glu-372. Residue Arg-374 is part of the active site.

This sequence belongs to the peptidase M17 family. Requires Mn(2+) as cofactor.

The protein resides in the cytoplasm. It catalyses the reaction Release of an N-terminal amino acid, Xaa-|-Yaa-, in which Xaa is preferably Leu, but may be other amino acids including Pro although not Arg or Lys, and Yaa may be Pro. Amino acid amides and methyl esters are also readily hydrolyzed, but rates on arylamides are exceedingly low.. The enzyme catalyses Release of an N-terminal amino acid, preferentially leucine, but not glutamic or aspartic acids.. Presumably involved in the processing and regular turnover of intracellular proteins. Catalyzes the removal of unsubstituted N-terminal amino acids from various peptides. The polypeptide is Probable cytosol aminopeptidase (pepA) (Mycobacterium leprae (strain TN)).